Reading from the N-terminus, the 539-residue chain is Heparanase-like protein 2 (539 aa).

The first 21 residues, M1–G21, serve as a signal peptide directing secretion. N-linked (GlcNAc...) asparagine glycans are attached at residues N143, N163, and N181. Catalysis depends on E198, which acts as the Proton donor. N300 is a glycosylation site (N-linked (GlcNAc...) asparagine). E316 serves as the catalytic Nucleophile. N421 carries an N-linked (GlcNAc...) asparagine glycan.

The protein belongs to the glycosyl hydrolase 79 family.

It localises to the lysosome membrane. The protein localises to the secreted. Functionally, endoglycosidase which is a cell surface and extracellular matrix-degrading enzyme. Cleaves heparan sulfate proteoglycans (HSPGs) into heparan sulfate side chains and core proteoglycans. This chain is Heparanase-like protein 2, found in Arabidopsis thaliana (Mouse-ear cress).